The sequence spans 209 residues: Uracil phosphoribosyltransferase (209 aa).

Residues Arg-79, Arg-104, and Asp-131 to Ser-139 each bind 5-phospho-alpha-D-ribose 1-diphosphate. Residues Ile-194 and Gly-199–Ala-201 each bind uracil. Position 200 (Asp-200) interacts with 5-phospho-alpha-D-ribose 1-diphosphate.

It belongs to the UPRTase family. It depends on Mg(2+) as a cofactor.

It catalyses the reaction UMP + diphosphate = 5-phospho-alpha-D-ribose 1-diphosphate + uracil. Its pathway is pyrimidine metabolism; UMP biosynthesis via salvage pathway; UMP from uracil: step 1/1. With respect to regulation, allosterically activated by GTP. Its function is as follows. Catalyzes the conversion of uracil and 5-phospho-alpha-D-ribose 1-diphosphate (PRPP) to UMP and diphosphate. The chain is Uracil phosphoribosyltransferase from Rhizobium meliloti (strain 1021) (Ensifer meliloti).